The primary structure comprises 314 residues: Probable cell division protein WhiA (314 aa).

Residues 274–308 constitute a DNA-binding region (H-T-H motif); it reads SLKELGEMVSTGTISKSGVNHRLRKLNELADKIRS.

This sequence belongs to the WhiA family.

Involved in cell division and chromosome segregation. The polypeptide is Probable cell division protein WhiA (Staphylococcus carnosus (strain TM300)).